A 103-amino-acid chain; its full sequence is Small ribosomal subunit protein uS10 (103 aa).

This sequence belongs to the universal ribosomal protein uS10 family. In terms of assembly, part of the 30S ribosomal subunit.

Involved in the binding of tRNA to the ribosomes. The sequence is that of Small ribosomal subunit protein uS10 from Polynucleobacter asymbioticus (strain DSM 18221 / CIP 109841 / QLW-P1DMWA-1) (Polynucleobacter necessarius subsp. asymbioticus).